The sequence spans 285 residues: uncharacterized protein (285 aa).

The signal sequence occupies residues 1 to 25 (MVKKWLIQFAVMLSVLSTFTYSASA).

This is an uncharacterized protein from Bacillus subtilis (strain 168).